The following is a 328-amino-acid chain: Cell division protein ZipA (328 aa).

Residues 1-6 (MMQDLR) are Periplasmic-facing. Residues 7–27 (LILIVVGAIAIIALLLHGLWT) form a helical membrane-spanning segment. The Cytoplasmic portion of the chain corresponds to 28 to 328 (SRKERSSLFR…REVLDANTIA (301 aa)). Basic and acidic residues predominate over residues 61–72 (GEVRVRTSHPQE). Residues 61-183 (GEVRVRTSHP…EPVAPAPEAK (123 aa)) form a disordered region. 2 stretches are compositionally biased toward polar residues: residues 95–104 (KSAQVKTASR) and 164–174 (APQQHVESQQE).

It belongs to the ZipA family. In terms of assembly, interacts with FtsZ via their C-terminal domains.

It is found in the cell inner membrane. Its function is as follows. Essential cell division protein that stabilizes the FtsZ protofilaments by cross-linking them and that serves as a cytoplasmic membrane anchor for the Z ring. Also required for the recruitment to the septal ring of downstream cell division proteins. The protein is Cell division protein ZipA of Yersinia pestis bv. Antiqua (strain Antiqua).